Here is a 245-residue protein sequence, read N- to C-terminus: Octanoyltransferase (245 aa).

In terms of domain architecture, BPL/LPL catalytic spans 54–238 (GEATELVWLL…AFENIFGETR (185 aa)). Substrate is bound by residues 92-99 (RGGQLTYH), 167-169 (AIG), and 180-182 (GIA). The active-site Acyl-thioester intermediate is the Cys198.

The protein belongs to the LipB family.

It localises to the cytoplasm. The catalysed reaction is octanoyl-[ACP] + L-lysyl-[protein] = N(6)-octanoyl-L-lysyl-[protein] + holo-[ACP] + H(+). It functions in the pathway protein modification; protein lipoylation via endogenous pathway; protein N(6)-(lipoyl)lysine from octanoyl-[acyl-carrier-protein]: step 1/2. Its function is as follows. Catalyzes the transfer of endogenously produced octanoic acid from octanoyl-acyl-carrier-protein onto the lipoyl domains of lipoate-dependent enzymes. Lipoyl-ACP can also act as a substrate although octanoyl-ACP is likely to be the physiological substrate. The polypeptide is Octanoyltransferase (Rhodopseudomonas palustris (strain TIE-1)).